A 473-amino-acid chain; its full sequence is Bifunctional protein HldE (473 aa).

The segment at 1–318 (MKLTLPRYDQ…RAVQREEGSE (318 aa)) is ribokinase. Residue 194-197 (NLHE) participates in ATP binding. Residue Asp263 is part of the active site. The cytidylyltransferase stretch occupies residues 343–473 (FTNGCFDILH…TAIVEKIRNK (131 aa)).

It in the N-terminal section; belongs to the carbohydrate kinase PfkB family. This sequence in the C-terminal section; belongs to the cytidylyltransferase family. As to quaternary structure, homodimer.

It carries out the reaction D-glycero-beta-D-manno-heptose 7-phosphate + ATP = D-glycero-beta-D-manno-heptose 1,7-bisphosphate + ADP + H(+). It catalyses the reaction D-glycero-beta-D-manno-heptose 1-phosphate + ATP + H(+) = ADP-D-glycero-beta-D-manno-heptose + diphosphate. Its pathway is nucleotide-sugar biosynthesis; ADP-L-glycero-beta-D-manno-heptose biosynthesis; ADP-L-glycero-beta-D-manno-heptose from D-glycero-beta-D-manno-heptose 7-phosphate: step 1/4. It functions in the pathway nucleotide-sugar biosynthesis; ADP-L-glycero-beta-D-manno-heptose biosynthesis; ADP-L-glycero-beta-D-manno-heptose from D-glycero-beta-D-manno-heptose 7-phosphate: step 3/4. In terms of biological role, catalyzes the phosphorylation of D-glycero-D-manno-heptose 7-phosphate at the C-1 position to selectively form D-glycero-beta-D-manno-heptose-1,7-bisphosphate. Catalyzes the ADP transfer from ATP to D-glycero-beta-D-manno-heptose 1-phosphate, yielding ADP-D-glycero-beta-D-manno-heptose. This Ectopseudomonas mendocina (strain ymp) (Pseudomonas mendocina) protein is Bifunctional protein HldE.